A 570-amino-acid chain; its full sequence is Proline--tRNA ligase (570 aa).

Belongs to the class-II aminoacyl-tRNA synthetase family. ProS type 1 subfamily. In terms of assembly, homodimer.

The protein resides in the cytoplasm. It catalyses the reaction tRNA(Pro) + L-proline + ATP = L-prolyl-tRNA(Pro) + AMP + diphosphate. Functionally, catalyzes the attachment of proline to tRNA(Pro) in a two-step reaction: proline is first activated by ATP to form Pro-AMP and then transferred to the acceptor end of tRNA(Pro). As ProRS can inadvertently accommodate and process non-cognate amino acids such as alanine and cysteine, to avoid such errors it has two additional distinct editing activities against alanine. One activity is designated as 'pretransfer' editing and involves the tRNA(Pro)-independent hydrolysis of activated Ala-AMP. The other activity is designated 'posttransfer' editing and involves deacylation of mischarged Ala-tRNA(Pro). The misacylated Cys-tRNA(Pro) is not edited by ProRS. The sequence is that of Proline--tRNA ligase from Clostridium acetobutylicum (strain ATCC 824 / DSM 792 / JCM 1419 / IAM 19013 / LMG 5710 / NBRC 13948 / NRRL B-527 / VKM B-1787 / 2291 / W).